The primary structure comprises 283 residues: Pantothenate synthetase (283 aa).

30–37 contributes to the ATP binding site; the sequence is MGNLHDGH. Histidine 37 (proton donor) is an active-site residue. Glutamine 61 is a binding site for (R)-pantoate. Beta-alanine is bound at residue glutamine 61. 149–152 lines the ATP pocket; the sequence is GEKD. Glutamine 155 serves as a coordination point for (R)-pantoate. 186 to 189 is an ATP binding site; that stretch reads LSSR.

Belongs to the pantothenate synthetase family. As to quaternary structure, homodimer.

It localises to the cytoplasm. The catalysed reaction is (R)-pantoate + beta-alanine + ATP = (R)-pantothenate + AMP + diphosphate + H(+). It functions in the pathway cofactor biosynthesis; (R)-pantothenate biosynthesis; (R)-pantothenate from (R)-pantoate and beta-alanine: step 1/1. Catalyzes the condensation of pantoate with beta-alanine in an ATP-dependent reaction via a pantoyl-adenylate intermediate. The sequence is that of Pantothenate synthetase from Escherichia coli (strain SMS-3-5 / SECEC).